We begin with the raw amino-acid sequence, 187 residues long: MTTTEKIVPRLKTRYRDEIRQALNEEFHYSNAMQVPGVVKVVVNMGVGDAARDSKLIEGAVRDLATITGQKPEIRKARKSIAQFKLREGMPIGARVTLRGDRMWEFIDRLVTIALPRIRDFRGLSGKQFDGKGNYTFGLNEQSMFHEIDPDSIDRPRGMDITVVTTANTDEEGRVLLRRLGFPFKEN.

Belongs to the universal ribosomal protein uL5 family. In terms of assembly, part of the 50S ribosomal subunit; part of the 5S rRNA/L5/L18/L25 subcomplex. Contacts the 5S rRNA and the P site tRNA. Forms a bridge to the 30S subunit in the 70S ribosome.

Its function is as follows. This is one of the proteins that bind and probably mediate the attachment of the 5S RNA into the large ribosomal subunit, where it forms part of the central protuberance. In the 70S ribosome it contacts protein S13 of the 30S subunit (bridge B1b), connecting the 2 subunits; this bridge is implicated in subunit movement. Contacts the P site tRNA; the 5S rRNA and some of its associated proteins might help stabilize positioning of ribosome-bound tRNAs. In Saccharopolyspora erythraea (strain ATCC 11635 / DSM 40517 / JCM 4748 / NBRC 13426 / NCIMB 8594 / NRRL 2338), this protein is Large ribosomal subunit protein uL5.